The sequence spans 3564 residues: CUB and sushi domain-containing protein 1 (3564 aa).

The first 29 residues, 1–29 (MTAWRKFKSLLLPLVLAVLCAGLLTAAKG), serve as a signal peptide directing secretion. The Extracellular portion of the chain corresponds to 30–3487 (QNCGGLVQGP…NHYQGTSSGS (3458 aa)). 10 disulfide bridges follow: Cys32/Cys58, Cys145/Cys185, Cys171/Cys202, Cys208/Cys234, Cys349/Cys389, Cys375/Cys406, Cys411/Cys437, Cys527/Cys567, Cys553/Cys580, and Cys584/Cys610. The 109-residue stretch at 32 to 140 (CGGLVQGPNG…QGFKAMYEVL (109 aa)) folds into the CUB 1 domain. Asn40 and Asn57 each carry an N-linked (GlcNAc...) asparagine glycan. The Sushi 1 domain occupies 143–204 (HTCGNPGEIL…WDFPAPFCRA (62 aa)). The region spanning 208–312 (CGGTLRGTSG…KGFNAQFQVK (105 aa)) is the CUB 2 domain. Residues 347-408 (DMCPDPGIPD…WNDHRPICRA (62 aa)) enclose the Sushi 2 domain. One can recognise a CUB 3 domain in the interval 411–522 (CGSNLRGPSG…PGFKAVYQEI (112 aa)). One can recognise a Sushi 3 domain in the interval 525-582 (GGCGDPGIPAYGKRTGSSFLHGDTLTFECQAAFELVGERVITCQKNNQWSGNKPSCVF). One can recognise a CUB 4 domain in the interval 584 to 692 (CFFNFTAPSG…RGFNITYTTF (109 aa)). Asn587 and Asn686 each carry an N-linked (GlcNAc...) asparagine glycan. The Sushi 4 domain occupies 695-756 (NECHDPGIPV…WSSTVPRCEA (62 aa)). 6 disulfide bridges follow: Cys697-Cys738, Cys723-Cys754, Cys758-Cys784, Cys873-Cys913, Cys899-Cys926, and Cys930-Cys956. Positions 758–866 (CGGHLTASSG…VGFLIHYESV (109 aa)) constitute a CUB 5 domain. The 58-residue stretch at 871 to 928 (DSCLDPGIPVNGQRHGSNFGIRSTVTFSCDPGYTLSDDEPLVCEKNHQWNHALPSCDA) folds into the Sushi 5 domain. The CUB 6 domain occupies 930–1040 (CGGYIHGKSG…EGFNITFAEY (111 aa)). N-linked (GlcNAc...) asparagine glycans are attached at residues Asn955, Asn1015, and Asn1034. One can recognise a Sushi 6 domain in the interval 1043–1102 (EPCDDPGVPAFSRRIGFQFGVGDTLAFTCFQGYRLEGATKLTCLGGGRRVWSAPLPRCVA). 3 disulfides stabilise this stretch: Cys1045/Cys1085, Cys1071/Cys1100, and Cys1104/Cys1130. The CUB 7 domain occupies 1104–1212 (CGASVKGNEG…QGFQLTYTSF (109 aa)). Residues Asn1184 and Asn1197 are each glycosylated (N-linked (GlcNAc...) asparagine). The 61-residue stretch at 1215–1275 (VKCEDPGIPN…WDKPMPSCVA (61 aa)) folds into the Sushi 7 domain. Cystine bridges form between Cys1217-Cys1258, Cys1244-Cys1273, Cys1277-Cys1304, Cys1391-Cys1431, Cys1417-Cys1447, Cys1451-Cys1477, Cys1564-Cys1604, Cys1590-Cys1621, Cys1625-Cys1651, Cys1741-Cys1781, Cys1767-Cys1798, and Cys1802-Cys1828. The CUB 8 domain maps to 1277–1386 (CGGLVHAATS…SGFSIQFSTS (110 aa)). One can recognise a Sushi 8 domain in the interval 1389-1449 (STCNDPGMPQ…WQPDPPSCIA (61 aa)). An N-linked (GlcNAc...) asparagine glycan is attached at Asn1399. Residues 1451 to 1559 (CGGNLTGPAG…SGFAIEFKEK (109 aa)) form the CUB 9 domain. 2 N-linked (GlcNAc...) asparagine glycosylation sites follow: Asn1454 and Asn1572. The Sushi 9 domain maps to 1562-1623 (EACFDPGNIM…WDRALPACQA (62 aa)). A CUB 10 domain is found at 1625 to 1733 (CGGQYTGSEG…RGFHFVYQAV (109 aa)). The N-linked (GlcNAc...) asparagine glycan is linked to Asn1644. A Sushi 10 domain is found at 1739–1800 (TQCSSVPEPR…WNDTIPSCVV (62 aa)). 3 N-linked (GlcNAc...) asparagine glycosylation sites follow: Asn1792, Asn1805, and Asn1882. The CUB 11 domain occupies 1802–1910 (CSGNFTQRRG…AGFHLEYKTV (109 aa)). The Sushi 11 domain maps to 1913-1972 (AACQEPALPSNGIKIGDRYMVNDVLSFQCEPGYTLQGRSHISCMPGTVRRWNYPSPLCIA). Cystine bridges form between Cys1915-Cys1955, Cys1941-Cys1970, and Cys1974-Cys2000. In terms of domain architecture, CUB 12 spans 1974–2082 (CGGTLTSMSG…QGFKLSYQAY (109 aa)). N-linked (GlcNAc...) asparagine glycosylation occurs at Asn2018. Residues 2085 to 2144 (QNCPDPPAFQNGFMINSDYSVGQSISFECYPGYILLGHPVLTCQHGTDRNWNYPFPRCDA) enclose the Sushi 12 domain. 3 cysteine pairs are disulfide-bonded: Cys2087-Cys2127, Cys2113-Cys2142, and Cys2146-Cys2172. Positions 2146–2257 (CGYNVTSQNG…LNFHAFQLKR (112 aa)) constitute a CUB 13 domain. N-linked (GlcNAc...) asparagine glycosylation is found at Asn2149, Asn2154, and Asn2187. A Sushi 13 domain is found at 2256-2317 (KRCPPPPAVP…FQGSPPTCEA (62 aa)). Cystine bridges form between Cys2258-Cys2300, Cys2286-Cys2315, and Cys2319-Cys2347. Residues 2319–2430 (CPANEVRTES…KGFKIRYAAP (112 aa)) enclose the CUB 14 domain. Residues Asn2358, Asn2394, Asn2400, Asn2445, Asn2470, and Asn2503 are each glycosylated (N-linked (GlcNAc...) asparagine). Sushi domains are found at residues 2430-2492 (PYCS…LCQA), 2493-2554 (VSCG…TCKP), 2555-2619 (VPCP…RCKV), 2620-2677 (ISCG…RCLA), 2678-2735 (GHCG…VCVP), 2736-2793 (ITCG…ICRV), 2794-2856 (VNCS…KCLA), 2857-2914 (ISCG…HCSG), 2918-2975 (GFCG…VCEA), 2976-3034 (VSCG…DCTI), 3035-3094 (ISCG…LCKA), 3095-3152 (VLCN…QCLP), 3153-3210 (VFCG…TCID), 3214-3272 (TACP…ECIP), and 3273-3332 (HACR…VCKS). 12 cysteine pairs are disulfide-bonded: Cys2432–Cys2473, Cys2459–Cys2490, Cys2495–Cys2537, Cys2521–Cys2552, Cys2557–Cys2602, Cys2588–Cys2617, Cys2622–Cys2662, Cys2648–Cys2675, Cys2680–Cys2720, Cys2706–Cys2733, Cys2738–Cys2778, and Cys2764–Cys2791. Asn2605 carries N-linked (GlcNAc...) asparagine glycosylation. Residues Asn2750 and Asn2761 are each glycosylated (N-linked (GlcNAc...) asparagine). Asn2795 is a glycosylation site (N-linked (GlcNAc...) asparagine). 18 cysteine pairs are disulfide-bonded: Cys2796/Cys2841, Cys2827/Cys2854, Cys2859/Cys2899, Cys2885/Cys2912, Cys2920/Cys2960, Cys2946/Cys2973, Cys2978/Cys3019, Cys3005/Cys3032, Cys3037/Cys3079, Cys3063/Cys3092, Cys3097/Cys3137, Cys3123/Cys3150, Cys3155/Cys3195, Cys3181/Cys3208, Cys3216/Cys3257, Cys3243/Cys3270, Cys3275/Cys3317, and Cys3302/Cys3330. An N-linked (GlcNAc...) asparagine glycan is attached at Asn2894. N-linked (GlcNAc...) asparagine glycosylation occurs at Asn2963. N-linked (GlcNAc...) asparagine glycosylation is found at Asn3022, Asn3056, and Asn3086. Residues Asn3228 and Asn3260 are each glycosylated (N-linked (GlcNAc...) asparagine). Asn3339, Asn3379, and Asn3386 each carry an N-linked (GlcNAc...) asparagine glycan. A helical membrane pass occupies residues 3488-3508 (VAAAILVPFFALILSGFAFYL). Topologically, residues 3509-3564 (YKHRTRPKVQYNGYAGHENSNGQASFENPMYDTNLKPTEAKAVRFDTTLNTVCTVV) are cytoplasmic.

Belongs to the CSMD family.

It localises to the membrane. The protein is CUB and sushi domain-containing protein 1 (Csmd1) of Mus musculus (Mouse).